Reading from the N-terminus, the 300-residue chain is Probable endonuclease 4 (300 aa).

H69, H110, E145, D179, H182, H214, D227, H229, and E259 together coordinate Zn(2+).

This sequence belongs to the AP endonuclease 2 family. Zn(2+) is required as a cofactor.

It carries out the reaction Endonucleolytic cleavage to 5'-phosphooligonucleotide end-products.. Its function is as follows. Endonuclease IV plays a role in DNA repair. It cleaves phosphodiester bonds at apurinic or apyrimidinic (AP) sites, generating a 3'-hydroxyl group and a 5'-terminal sugar phosphate. The chain is Probable endonuclease 4 from Lachnoclostridium phytofermentans (strain ATCC 700394 / DSM 18823 / ISDg) (Clostridium phytofermentans).